Reading from the N-terminus, the 181-residue chain is Inner membrane-spanning protein YciB (181 aa).

5 helical membrane passes run 3–23 (LLFD…FGIY), 54–74 (SLAI…PWFI), 81–101 (IYWL…KPLI), 119–139 (LNLA…YVAY), and 149–169 (FKLF…AFYL).

The protein belongs to the YciB family.

Its subcellular location is the cell inner membrane. Plays a role in cell envelope biogenesis, maintenance of cell envelope integrity and membrane homeostasis. In Legionella pneumophila (strain Corby), this protein is Inner membrane-spanning protein YciB.